The primary structure comprises 373 residues: GTPase-activating protein gyp10 (373 aa).

One can recognise a Rab-GAP TBC domain in the interval 35–220; sequence FLMKSLRKSV…RLFDFFISSH (186 aa). A helical membrane pass occupies residues 343 to 363; the sequence is IFNGCNMLAAITVIGIGIVAS.

It is found in the endoplasmic reticulum membrane. Has a role in vesicular trafficking and septation during cytokinesis. The chain is GTPase-activating protein gyp10 (gyp10) from Schizosaccharomyces pombe (strain 972 / ATCC 24843) (Fission yeast).